We begin with the raw amino-acid sequence, 370 residues long: Developmentally-regulated GTP-binding protein 1 homolog (370 aa).

Residues 65–292 (ARVGLIGFPS…LLDKIWEYLK (228 aa)) enclose the OBG-type G domain. GTP-binding positions include 71–78 (GFPSVGKS), 117–121 (DLPGI), and 250–253 (NKID). One can recognise a TGS domain in the interval 292-369 (KLIRVYTKPK…ADEDIVQIVK (78 aa)).

It belongs to the TRAFAC class OBG-HflX-like GTPase superfamily. OBG GTPase family.

This chain is Developmentally-regulated GTP-binding protein 1 homolog (drg1), found in Dictyostelium discoideum (Social amoeba).